A 352-amino-acid chain; its full sequence is Probable tyrosine-protein kinase DDB_G0290471 (352 aa).

The Protein kinase domain maps to 51 to 333 (IEYVCRLGSG…ISLNQIRSFY (283 aa)). ATP is bound by residues 57 to 65 (LGSGSLCRV) and K78. The active-site Proton acceptor is the D175.

It belongs to the protein kinase superfamily. TKL Tyr protein kinase family.

It catalyses the reaction L-tyrosyl-[protein] + ATP = O-phospho-L-tyrosyl-[protein] + ADP + H(+). The polypeptide is Probable tyrosine-protein kinase DDB_G0290471 (Dictyostelium discoideum (Social amoeba)).